Here is a 130-residue protein sequence, read N- to C-terminus: Small ribosomal subunit protein uS9 (130 aa).

Belongs to the universal ribosomal protein uS9 family.

The chain is Small ribosomal subunit protein uS9 from Burkholderia vietnamiensis (strain G4 / LMG 22486) (Burkholderia cepacia (strain R1808)).